The primary structure comprises 316 residues: Melanocyte-stimulating hormone receptor (316 aa).

Residues 1–37 are Extracellular-facing; the sequence is MPMQGAQRKLLGSLNSTPTATSNLGLAANHTGAPCLE. Residue Asn-29 is glycosylated (N-linked (GlcNAc...) asparagine). The helical transmembrane segment at 38-63 threads the bilayer; the sequence is VSIPDGLFLSLGLVSLVENVLVVAAI. The Cytoplasmic portion of the chain corresponds to 64-72; the sequence is AKNRNLHSS. A helical membrane pass occupies residues 73–93; the sequence is MYCFICCLALSDLLVSGSNML. At 94–118 the chain is on the extracellular side; it reads ETAVILLLETGALATRTSVVQQLHN. The helical transmembrane segment at 119–140 threads the bilayer; the sequence is TINVLTCSSMLCSLCFLGAIAV. At 141 to 163 the chain is on the cytoplasmic side; that stretch reads DRYISIFYALRYHSIMTLPRAQR. The chain crosses the membrane as a helical span at residues 164–183; it reads AIAAIWVASVLSSTLFITYY. Residues 184–191 are Extracellular-facing; sequence DHAAVLLC. A helical transmembrane segment spans residues 192–211; it reads LVVFFLAMLVLMAVLYVHML. The Cytoplasmic segment spans residues 212–240; the sequence is ARACQHAHGIIRLHKRQTPAHQAFGLRGA. A helical transmembrane segment spans residues 241–266; the sequence is ATLTILLGIFFLCWGPFFLHLTLVVF. At 267–279 the chain is on the extracellular side; the sequence is CPQHLTCSCIFKN. A helical membrane pass occupies residues 280-300; that stretch reads FKVFLTLIICNTIIDPLIYAF. The Cytoplasmic segment spans residues 301–316; it reads RSQELRRTLKEVLCSW. Cys-314 is lipidated: S-palmitoyl cysteine.

The protein belongs to the G-protein coupled receptor 1 family. Interacts with MGRN1, but does not undergo MGRN1-mediated ubiquitination; this interaction competes with GNAS-binding and thus inhibits agonist-induced cAMP production. Interacts with OPN3; the interaction results in a decrease in MC1R-mediated cAMP signaling and ultimately a decrease in melanin production in melanocytes.

It is found in the cell membrane. In terms of biological role, receptor for MSH (alpha, beta and gamma) and ACTH. The activity of this receptor is mediated by G proteins which activate adenylate cyclase. Mediates melanogenesis, the production of eumelanin (black/brown) and phaeomelanin (red/yellow), via regulation of cAMP signaling in melanocytes. This is Melanocyte-stimulating hormone receptor (MC1R) from Saguinus geoffroyi (Geoffroy's tamarin).